The sequence spans 123 residues: Large ribosomal subunit protein uL29 (123 aa).

This sequence belongs to the universal ribosomal protein uL29 family.

In Theileria lestoquardi, this protein is Large ribosomal subunit protein uL29 (RPL35).